A 331-amino-acid polypeptide reads, in one-letter code: DNA fragmentation factor subunit alpha (331 aa).

N-acetylmethionine is present on methionine 1. Positions 17-96 constitute a CIDE-N domain; it reads TLKPCLLRRN…ALASNEKWAY (80 aa). Threonine 243 is modified (phosphothreonine). Positions 305–331 are disordered; that stretch reads SLRSISASKASPPGDLQNPKRARQDPT. Serine 315 is subject to Phosphoserine.

Heterodimer of DFFA and DFFB. Post-translationally, caspase-3 cleaves DFF45 at 2 sites to generate an active factor.

Its subcellular location is the cytoplasm. In terms of biological role, inhibitor of the caspase-activated DNase (DFF40). The sequence is that of DNA fragmentation factor subunit alpha (DFFA) from Homo sapiens (Human).